A 601-amino-acid polypeptide reads, in one-letter code: MTALSLQQQLAESIYTALGTAFEAGQLGQLTQLPPRQSVVVEKPKVPEHGDYATPVAMSLAKPCRLAPLAIAEAIASYLASDEIGVEVAKPGFINLRLGHRFVAVELQNILELKGDYGRTVPQQPERILLEFVSANPTGPLHLGHGRWAALGSSLERILQFAGYTVDSEFYINDAGNQMQLLGLSLKQRYLQVLGEAVELPDGGYKGSYLKELAEQLVADKGDSLGGEPVEWFSAYAEGRLLEQQKITLQQFRTEFDRWYSERSLHCAGAIEAALADLEARGMLYRAARSRQEQSGEITGRSKKVQAPAAFEEEDGGGEALFFKAADFGDEMDRVVKRADGNTTYLAADIAYHWDKYQRGYGRLINIWGADHHGYVPRMKAVAQALGHPADSLEILIGQMVRLFKTNPETGQKEEMRMSKRRGELVSVDDLIEEVGVDAGRWFLLSQSLNTTVNFDLDLAQSEKFDNPVFYVQYNHARCCSILRKAPERGMPILERFEFLKPDGGLWLETPQERTLALRLLAAPDEYRFAAVDRTPQRLTQYAYDLASDVSQFYEHCPILPPLAENLEPALRYARLGLVVATRQVLATTLTLLGIEPRESM.

The short motif at 135-145 is the 'HIGH' region element; it reads ANPTGPLHLGH.

This sequence belongs to the class-I aminoacyl-tRNA synthetase family. In terms of assembly, monomer.

The protein resides in the cytoplasm. It carries out the reaction tRNA(Arg) + L-arginine + ATP = L-arginyl-tRNA(Arg) + AMP + diphosphate. The chain is Arginine--tRNA ligase from Gloeobacter violaceus (strain ATCC 29082 / PCC 7421).